The following is a 466-amino-acid chain: Ribulose bisphosphate carboxylase large chain (466 aa).

K5 is modified (N6,N6,N6-trimethyllysine). Substrate is bound by residues N114 and T164. K166 (proton acceptor) is an active-site residue. K168 lines the substrate pocket. Mg(2+) contacts are provided by K192, D194, and E195. N6-carboxylysine is present on K192. H285 functions as the Proton acceptor in the catalytic mechanism. 3 residues coordinate substrate: R286, H318, and S370.

This sequence belongs to the RuBisCO large chain family. Type I subfamily. In terms of assembly, heterohexadecamer of 8 large chains and 8 small chains; disulfide-linked. The disulfide link is formed within the large subunit homodimers. Requires Mg(2+) as cofactor. Post-translationally, the disulfide bond which can form in the large chain dimeric partners within the hexadecamer appears to be associated with oxidative stress and protein turnover.

The protein resides in the plastid. It is found in the chloroplast. It carries out the reaction 2 (2R)-3-phosphoglycerate + 2 H(+) = D-ribulose 1,5-bisphosphate + CO2 + H2O. It catalyses the reaction D-ribulose 1,5-bisphosphate + O2 = 2-phosphoglycolate + (2R)-3-phosphoglycerate + 2 H(+). RuBisCO catalyzes two reactions: the carboxylation of D-ribulose 1,5-bisphosphate, the primary event in carbon dioxide fixation, as well as the oxidative fragmentation of the pentose substrate in the photorespiration process. Both reactions occur simultaneously and in competition at the same active site. This chain is Ribulose bisphosphate carboxylase large chain, found in Cucurbita pepo (Vegetable marrow).